Reading from the N-terminus, the 268-residue chain is Chymotrypsin-C (268 aa).

The N-terminal stretch at 1–16 (MLGITVFTTFLAYASS) is a signal peptide. Positions 17-29 (CGAPIFQPNLSAR) are cleaved as a propeptide — activation peptide. 5 disulfide bridges follow: cysteine 17–cysteine 141, cysteine 59–cysteine 75, cysteine 155–cysteine 222, cysteine 186–cysteine 202, and cysteine 212–cysteine 243. Residue asparagine 25 is glycosylated (N-linked (GlcNAc...) asparagine). A Peptidase S1 domain is found at 30 to 268 (VVGGEDAIPH…IDWINQKLQL (239 aa)). Catalysis depends on charge relay system residues histidine 74 and aspartate 121. Residue serine 216 is the Charge relay system of the active site.

It belongs to the peptidase S1 family. Elastase subfamily. In terms of assembly, monomer. The zymogen is secreted as a ternary complex composed of procarboxypeptidase A, chymotrypsinogen C and proproteinase E. As to expression, pancreas.

Its subcellular location is the secreted. It is found in the extracellular space. It carries out the reaction Preferential cleavage: Leu-|-Xaa, Tyr-|-Xaa, Phe-|-Xaa, Met-|-Xaa, Trp-|-Xaa, Gln-|-Xaa, Asn-|-Xaa.. Regulates activation and degradation of trypsinogens and procarboxypeptidases by targeting specific cleavage sites within their zymogen precursors. Has chymotrypsin-type protease activity and hypocalcemic activity. The chain is Chymotrypsin-C (CTRC) from Bos taurus (Bovine).